Reading from the N-terminus, the 211-residue chain is PITH domain-containing protein 1 (211 aa).

Residues 20-192 (EPPEQRGLAY…EVTICNYEAS (173 aa)) form the PITH domain. Tyr-189 bears the Phosphotyrosine mark.

This sequence belongs to the PITHD1 family. As to expression, down-regulated in primary acute myeloid leukemia (AML) patients.

Its subcellular location is the cytoplasm. Promotes megakaryocyte differentiation by up-regulating RUNX1 expression. Regulates RUNX1 expression by activating the proximal promoter of the RUNX1 gene and by enhancing the translation activity of an internal ribosome entry site (IRES) element in the RUNX1 gene. This Homo sapiens (Human) protein is PITH domain-containing protein 1 (PITHD1).